Consider the following 157-residue polypeptide: Crossover junction endodeoxyribonuclease RuvC (157 aa).

Residues Asp-7, Glu-66, and Asp-139 contribute to the active site. Residues Asp-7, Glu-66, and Asp-139 each contribute to the Mg(2+) site.

The protein belongs to the RuvC family. As to quaternary structure, homodimer which binds Holliday junction (HJ) DNA. The HJ becomes 2-fold symmetrical on binding to RuvC with unstacked arms; it has a different conformation from HJ DNA in complex with RuvA. In the full resolvosome a probable DNA-RuvA(4)-RuvB(12)-RuvC(2) complex forms which resolves the HJ. Mg(2+) is required as a cofactor.

The protein localises to the cytoplasm. It catalyses the reaction Endonucleolytic cleavage at a junction such as a reciprocal single-stranded crossover between two homologous DNA duplexes (Holliday junction).. The RuvA-RuvB-RuvC complex processes Holliday junction (HJ) DNA during genetic recombination and DNA repair. Endonuclease that resolves HJ intermediates. Cleaves cruciform DNA by making single-stranded nicks across the HJ at symmetrical positions within the homologous arms, yielding a 5'-phosphate and a 3'-hydroxyl group; requires a central core of homology in the junction. The consensus cleavage sequence is 5'-(A/T)TT(C/G)-3'. Cleavage occurs on the 3'-side of the TT dinucleotide at the point of strand exchange. HJ branch migration catalyzed by RuvA-RuvB allows RuvC to scan DNA until it finds its consensus sequence, where it cleaves and resolves the cruciform DNA. Functionally, required for efficient infection in a mouse model system. The sequence is that of Crossover junction endodeoxyribonuclease RuvC from Helicobacter pylori (strain G27).